A 576-amino-acid chain; its full sequence is Calmodulin-binding protein 60 B (576 aa).

Residues 1–25 (MMLPTKRPAPDHGDDERNEVMVPEP) form a disordered region. Residues 1–80 (MMLPTKRPAP…HPSSRPSLNR (80 aa)) are calmodulin-binding. Basic and acidic residues predominate over residues 8-25 (PAPDHGDDERNEVMVPEP). The DNA-binding stretch occupies residues 150–273 (DERQDWTENE…AFHKRLAYKN (124 aa)).

Belongs to the plant ACBP60 protein family. (Microbial infection) Interacts with V.dahliae SCP41. In terms of assembly, interacts with calmodulin (CaM).

It localises to the nucleus. Functionally, transcription activator that binds DNA in a sequence-specific manner, likely 5'-GAAATTTTGG-3', to promote the expression of target genes. Required for pathogen resistance. This Gossypium hirsutum (Upland cotton) protein is Calmodulin-binding protein 60 B.